A 430-amino-acid polypeptide reads, in one-letter code: Adenylosuccinate synthetase (430 aa).

GTP-binding positions include 13-19 (GDEGKGK) and 41-43 (GHT). Aspartate 14 (proton acceptor) is an active-site residue. Mg(2+) is bound by residues aspartate 14 and glycine 41. IMP contacts are provided by residues 14–17 (DEGK), 39–42 (NAGH), threonine 130, arginine 144, glutamine 225, threonine 240, and arginine 304. The active-site Proton donor is the histidine 42. Position 300-306 (300-306 (STTGRAR)) interacts with substrate. Residues arginine 306, 332–334 (KLD), and 414–416 (STG) contribute to the GTP site.

It belongs to the adenylosuccinate synthetase family. In terms of assembly, homodimer. Mg(2+) is required as a cofactor.

The protein localises to the cytoplasm. It carries out the reaction IMP + L-aspartate + GTP = N(6)-(1,2-dicarboxyethyl)-AMP + GDP + phosphate + 2 H(+). Its pathway is purine metabolism; AMP biosynthesis via de novo pathway; AMP from IMP: step 1/2. Its function is as follows. Plays an important role in the de novo pathway of purine nucleotide biosynthesis. Catalyzes the first committed step in the biosynthesis of AMP from IMP. This chain is Adenylosuccinate synthetase, found in Pseudomonas entomophila (strain L48).